Consider the following 151-residue polypeptide: Nucleoside diphosphate kinase (151 aa).

ATP is bound by residues K11, F59, R87, T93, R104, and N114. H117 acts as the Pros-phosphohistidine intermediate in catalysis.

The protein belongs to the NDK family. Homohexamer. It depends on Mg(2+) as a cofactor.

It carries out the reaction a 2'-deoxyribonucleoside 5'-diphosphate + ATP = a 2'-deoxyribonucleoside 5'-triphosphate + ADP. It catalyses the reaction a ribonucleoside 5'-diphosphate + ATP = a ribonucleoside 5'-triphosphate + ADP. Its function is as follows. Major role in the synthesis of nucleoside triphosphates other than ATP. The ATP gamma phosphate is transferred to the NDP beta phosphate via a ping-pong mechanism, using a phosphorylated active-site intermediate. The sequence is that of Nucleoside diphosphate kinase from Ginglymostoma cirratum (Nurse shark).